A 754-amino-acid polypeptide reads, in one-letter code: MARFPTSPAPNRLLRLFSSNKRSSSPTAALLTGDFQLIRHFSAGTAARVAKDEKEPWWKESMDKLRNIGISAHIDSGKTTLTERVLFYTGRIHEIHEVRGRDGVGAKMDSMDLEREKGITIQSAATYCTWKDYKVNIIDTPGHVDFTIEVERALRVLDGAILVLCSVGGVQSQSITVDRQMRRYEVPRVAFINKLDRMGADPWKVLNQARAKLRHHSAAVQVPIGLEENFQGLIDLIHVKAYFFHGSSGENVVAGDIPADMEGLVAEKRRELIETVSEVDDVLAEKFLNDEPVSASELEEAIRRATIAQTFVPVFMGSAFKNKGVQPLLDGVVSFLPSPNEVNNYALDQNNNEERVTLTGSPDGPLVALAFKLEEGRFGQLTYLRVYEGVIKKGDFIINVNTGKRIKVPRLVRMHSNDMEDIQEAHAGQIVAVFGIECASGDTFTDGSVKYTMTSMNVPEPVMSLAVQPVSKDSGGQFSKALNRFQKEDPTFRVGLDPESGQTIISGMGELHLDIYVERMRREYKVDATVGKPRVNFRETITQRAEFDYLHKKQSGGAGQYGRVTGYVEPLPPGSKEKFEFENMIVGQAIPSGFIPAIEKGFKEAANSGSLIGHPVENLRIVLTDGASHAVDSSELAFKMAAIYAFRLCYTAARPVILEPVMLVELKVPTEFQGTVAGDINKRKGIIVGNDQEGDDSVITANVPLNNMFGYSTSLRSMTQGKGEFTMEYKEHSAVSNEVQAQLVNAYSASKATE.

A mitochondrion-targeting transit peptide spans 1-17 (MARFPTSPAPNRLLRLF). The tr-type G domain maps to 63-340 (DKLRNIGISA…GVVSFLPSPN (278 aa)). GTP is bound by residues 72–79 (AHIDSGKT), 139–143 (DTPGH), and 193–196 (NKLD).

The protein belongs to the TRAFAC class translation factor GTPase superfamily. Classic translation factor GTPase family. EF-G/EF-2 subfamily. In terms of tissue distribution, expressed in cotyledons and adult leaves at the same levels.

The protein localises to the mitochondrion. It functions in the pathway protein biosynthesis; polypeptide chain elongation. Mitochondrial GTPase that catalyzes the GTP-dependent ribosomal translocation step during translation elongation. During this step, the ribosome changes from the pre-translocational (PRE) to the post-translocational (POST) state as the newly formed A-site-bound peptidyl-tRNA and P-site-bound deacylated tRNA move to the P and E sites, respectively. Catalyzes the coordinated movement of the two tRNA molecules, the mRNA and conformational changes in the ribosome. The polypeptide is Elongation factor G-1, mitochondrial (MEFG1) (Arabidopsis thaliana (Mouse-ear cress)).